The sequence spans 512 residues: MSEDQDLGITQSKIHNTGEWYAEVVQKAELANYGPEGMSGFIVTRPRAYGLWERVQSYLDTRFKQTGVQNAYFPLFIPEGYLEREKEIVEGFDPEVAWVEQAGRNELEERLAVRPTSESIIAPYLSQWIRSYRDLPLRVNQWTSVVRWEATETKPFFRTKEFLWQEGHTAHATRADAWAETMLRLNQYESTYEDLLAIPVLQGAKPEHDKFPGADTTTTVEALMPDGKSVQGATSHYLGTEFADAFDITYTDTDETSRVAHTTSWGLSWRALGALIMTHSDNQGLVLPPTVAPEQVVIVPIWQTETKERVLEYAEDVANNLDDAGIRVELDDRDDQNPGFKFNEWELKGVPLRAEIGPDEATEGTVTLIHRPDGESITAERSEIVETVQEQFDAVYAKLYAAAEETLNSNIRIAETRSELLGTIGQHGGYVKTPWCGDEGCETAIKDEIAAEIVMVPISSDEDDEQDTTDENMGVNNDTTVESNEKSLDLTDSTCVVCDNPAFKTAYFAKSY.

The segment covering 460-470 has biased composition (acidic residues); it reads SDEDDEQDTTD. The segment at 460–484 is disordered; sequence SDEDDEQDTTDENMGVNNDTTVESN.

The protein belongs to the class-II aminoacyl-tRNA synthetase family. ProS type 3 subfamily. Homodimer.

The protein resides in the cytoplasm. The catalysed reaction is tRNA(Pro) + L-proline + ATP = L-prolyl-tRNA(Pro) + AMP + diphosphate. Catalyzes the attachment of proline to tRNA(Pro) in a two-step reaction: proline is first activated by ATP to form Pro-AMP and then transferred to the acceptor end of tRNA(Pro). The polypeptide is Proline--tRNA ligase (Haloquadratum walsbyi (strain DSM 16790 / HBSQ001)).